The sequence spans 644 residues: Chaperone protein DnaK (644 aa).

At T199 the chain carries Phosphothreonine; by autocatalysis. Positions 602-644 (IYAKKSSEGQTAQGQTQSQESTKPAEEGVVDAEFEEVKEEDKK) are disordered. The segment covering 609 to 623 (EGQTAQGQTQSQEST) has biased composition (polar residues). Residues 629-644 (GVVDAEFEEVKEEDKK) show a composition bias toward acidic residues.

It belongs to the heat shock protein 70 family.

Its function is as follows. Acts as a chaperone. The chain is Chaperone protein DnaK from Legionella pneumophila (strain Lens).